Reading from the N-terminus, the 86-residue chain is Small ribosomal subunit protein bS20 (86 aa).

It belongs to the bacterial ribosomal protein bS20 family.

Functionally, binds directly to 16S ribosomal RNA. This is Small ribosomal subunit protein bS20 from Sulfurimonas denitrificans (strain ATCC 33889 / DSM 1251) (Thiomicrospira denitrificans (strain ATCC 33889 / DSM 1251)).